A 209-amino-acid chain; its full sequence is Octanoyltransferase (209 aa).

The BPL/LPL catalytic domain maps to 30–209; it reads DHEPEIIYLV…IQTEFNKIFK (180 aa). Substrate is bound by residues 69-76, 143-145, and 156-158; these read RGGKFTFH, AIG, and GVA. The active-site Acyl-thioester intermediate is Cys174.

The protein belongs to the LipB family.

It localises to the cytoplasm. It carries out the reaction octanoyl-[ACP] + L-lysyl-[protein] = N(6)-octanoyl-L-lysyl-[protein] + holo-[ACP] + H(+). It functions in the pathway protein modification; protein lipoylation via endogenous pathway; protein N(6)-(lipoyl)lysine from octanoyl-[acyl-carrier-protein]: step 1/2. Functionally, catalyzes the transfer of endogenously produced octanoic acid from octanoyl-acyl-carrier-protein onto the lipoyl domains of lipoate-dependent enzymes. Lipoyl-ACP can also act as a substrate although octanoyl-ACP is likely to be the physiological substrate. This chain is Octanoyltransferase, found in Rickettsia peacockii (strain Rustic).